Here is a 735-residue protein sequence, read N- to C-terminus: Catalase-peroxidase (735 aa).

The interval 1-31 (MENNTNPISGQGKCPFSGGAAKQSAGAGTRN) is disordered. Positions 17–28 (SGGAAKQSAGAG) are enriched in low complexity. Positions 103–226 (WHSAGTYRVA…LAAVQMGLIY (124 aa)) form a cross-link, tryptophyl-tyrosyl-methioninium (Trp-Tyr) (with M-252). H104 serves as the catalytic Proton acceptor. The tryptophyl-tyrosyl-methioninium (Tyr-Met) (with W-103) cross-link spans 226–252 (YVNPEGPNGNPDPLASARDIRETFARM). H267 provides a ligand contact to heme b. The segment at 352–371 (KPKNGAGAGTVPDAHNSSKS) is disordered.

This sequence belongs to the peroxidase family. Peroxidase/catalase subfamily. As to quaternary structure, homodimer or homotetramer. Requires heme b as cofactor. Formation of the three residue Trp-Tyr-Met cross-link is important for the catalase, but not the peroxidase activity of the enzyme.

The catalysed reaction is H2O2 + AH2 = A + 2 H2O. It carries out the reaction 2 H2O2 = O2 + 2 H2O. Its function is as follows. Bifunctional enzyme with both catalase and broad-spectrum peroxidase activity. In Flavobacterium psychrophilum (strain ATCC 49511 / DSM 21280 / CIP 103535 / JIP02/86), this protein is Catalase-peroxidase.